Consider the following 141-residue polypeptide: Protein C19orf12 (141 aa).

A helical transmembrane segment spans residues 40 to 60 (FVGGLVGGPPGLAVGGAVGGL).

Belongs to the C19orf12 family.

It is found in the mitochondrion. It localises to the mitochondrion membrane. The protein localises to the endoplasmic reticulum. Its subcellular location is the cytoplasm. The protein resides in the cytosol. The polypeptide is Protein C19orf12 (C19orf12) (Homo sapiens (Human)).